Consider the following 132-residue polypeptide: RING-H2 finger protein ATL39 (132 aa).

Residues 10-30 traverse the membrane as a helical segment; sequence TIVFAFASIGFIAFYIINYYI. The segment at 85–127 adopts an RING-type; atypical zinc-finger fold; sequence CVVCLNEFKDDETLRLVPPCVHVFHADCVDIWLSHSSTCPICR.

Belongs to the RING-type zinc finger family. ATL subfamily.

Its subcellular location is the membrane. The catalysed reaction is S-ubiquitinyl-[E2 ubiquitin-conjugating enzyme]-L-cysteine + [acceptor protein]-L-lysine = [E2 ubiquitin-conjugating enzyme]-L-cysteine + N(6)-ubiquitinyl-[acceptor protein]-L-lysine.. Its pathway is protein modification; protein ubiquitination. The sequence is that of RING-H2 finger protein ATL39 (ATL39) from Arabidopsis thaliana (Mouse-ear cress).